We begin with the raw amino-acid sequence, 474 residues long: tRNA-2-methylthio-N(6)-dimethylallyladenosine synthase (474 aa).

Residues 3–120 (KKLHIKTWGC…LPEMIEQVRR (118 aa)) enclose the MTTase N-terminal domain. 6 residues coordinate [4Fe-4S] cluster: Cys12, Cys49, Cys83, Cys157, Cys161, and Cys164. One can recognise a Radical SAM core domain in the interval 143 to 375 (RAEGPTAFVS…QDRITQQAMR (233 aa)). A TRAM domain is found at 378 to 441 (RHMMGTVQRI…TNSLRGVFIR (64 aa)).

This sequence belongs to the methylthiotransferase family. MiaB subfamily. In terms of assembly, monomer. [4Fe-4S] cluster serves as cofactor.

The protein resides in the cytoplasm. It catalyses the reaction N(6)-dimethylallyladenosine(37) in tRNA + (sulfur carrier)-SH + AH2 + 2 S-adenosyl-L-methionine = 2-methylsulfanyl-N(6)-dimethylallyladenosine(37) in tRNA + (sulfur carrier)-H + 5'-deoxyadenosine + L-methionine + A + S-adenosyl-L-homocysteine + 2 H(+). In terms of biological role, catalyzes the methylthiolation of N6-(dimethylallyl)adenosine (i(6)A), leading to the formation of 2-methylthio-N6-(dimethylallyl)adenosine (ms(2)i(6)A) at position 37 in tRNAs that read codons beginning with uridine. The protein is tRNA-2-methylthio-N(6)-dimethylallyladenosine synthase of Shewanella baltica (strain OS155 / ATCC BAA-1091).